A 599-amino-acid chain; its full sequence is Elongation factor 4 (599 aa).

The tr-type G domain maps to 4–186; that stretch reads ENIRNFSIIA…EIVTKIPPPQ (183 aa). Residues 16 to 21 and 133 to 136 each bind GTP; these read DHGKST and NKID.

Belongs to the TRAFAC class translation factor GTPase superfamily. Classic translation factor GTPase family. LepA subfamily.

It is found in the cell inner membrane. The enzyme catalyses GTP + H2O = GDP + phosphate + H(+). Its function is as follows. Required for accurate and efficient protein synthesis under certain stress conditions. May act as a fidelity factor of the translation reaction, by catalyzing a one-codon backward translocation of tRNAs on improperly translocated ribosomes. Back-translocation proceeds from a post-translocation (POST) complex to a pre-translocation (PRE) complex, thus giving elongation factor G a second chance to translocate the tRNAs correctly. Binds to ribosomes in a GTP-dependent manner. The protein is Elongation factor 4 of Geotalea uraniireducens (strain Rf4) (Geobacter uraniireducens).